We begin with the raw amino-acid sequence, 199 residues long: MLSALRTAGAVGTRRLASTQAIASNSEAPKGIATTGTPFLNPSSKAEYALARLDDVLNLAQRGSIWPLTFGLACCAVEMMHFAAPRYDMDRYGVVFRASPRQADLIFVAGTVTNKMAPALRRIYDQMPEAKWVISMGSCANGGGYYHYAYSVLRGCDRVIPVDIYVPGCPPTAEALLYGVLQLQKKIKRKREAQLWYRR.

4 residues coordinate [4Fe-4S] cluster: Cys-74, Cys-75, Cys-139, and Cys-169.

This sequence belongs to the complex I 20 kDa subunit family. In terms of assembly, complex I is composed of 45 different subunits This is a component of the iron-sulfur (IP) fragment of the enzyme. Requires [4Fe-4S] cluster as cofactor.

The protein localises to the mitochondrion. The catalysed reaction is a ubiquinone + NADH + 5 H(+)(in) = a ubiquinol + NAD(+) + 4 H(+)(out). Core subunit of the mitochondrial membrane respiratory chain NADH dehydrogenase (Complex I) that is believed to belong to the minimal assembly required for catalysis. Complex I functions in the transfer of electrons from NADH to the respiratory chain. The immediate electron acceptor for the enzyme is believed to be ubiquinone. This Caenorhabditis elegans protein is Probable NADH dehydrogenase [ubiquinone] iron-sulfur protein 7, mitochondrial (nduf-7).